Here is a 137-residue protein sequence, read N- to C-terminus: MQNPRRTKYRKQHRGRLRGISSRGNVVSFGKYALQALEPAWITARQIEAGRRAITRHARRGGKLWIRIFPDKPITMRPAETRMGSGKGSPEYWVSVIKPGRIIYELGGVSKEVAEAAMLIAAHKMPIQTRLVTSEKL.

It belongs to the universal ribosomal protein uL16 family. In terms of assembly, part of the 50S ribosomal subunit.

It is found in the plastid. The protein localises to the chloroplast. The polypeptide is Large ribosomal subunit protein uL16c (Adiantum capillus-veneris (Maidenhair fern)).